A 377-amino-acid chain; its full sequence is Carbamoyl phosphate synthase small chain (377 aa).

The segment at 1-186 (MSTPALLVLA…LGKGFVTPDE (186 aa)) is CPSase. L-glutamine is bound by residues Ser-47, Gly-238, and Gly-240. One can recognise a Glutamine amidotransferase type-1 domain in the interval 190-377 (HVVAYDFGVK…IGNMKAAKRA (188 aa)). Cys-266 acts as the Nucleophile in catalysis. The L-glutamine site is built by Leu-267, Gln-270, Asn-308, Gly-310, and Phe-311. Catalysis depends on residues His-350 and Glu-352.

This sequence belongs to the CarA family. As to quaternary structure, composed of two chains; the small (or glutamine) chain promotes the hydrolysis of glutamine to ammonia, which is used by the large (or ammonia) chain to synthesize carbamoyl phosphate. Tetramer of heterodimers (alpha,beta)4.

It catalyses the reaction hydrogencarbonate + L-glutamine + 2 ATP + H2O = carbamoyl phosphate + L-glutamate + 2 ADP + phosphate + 2 H(+). It carries out the reaction L-glutamine + H2O = L-glutamate + NH4(+). It functions in the pathway amino-acid biosynthesis; L-arginine biosynthesis; carbamoyl phosphate from bicarbonate: step 1/1. Its pathway is pyrimidine metabolism; UMP biosynthesis via de novo pathway; (S)-dihydroorotate from bicarbonate: step 1/3. Functionally, small subunit of the glutamine-dependent carbamoyl phosphate synthetase (CPSase). CPSase catalyzes the formation of carbamoyl phosphate from the ammonia moiety of glutamine, carbonate, and phosphate donated by ATP, constituting the first step of 2 biosynthetic pathways, one leading to arginine and/or urea and the other to pyrimidine nucleotides. The small subunit (glutamine amidotransferase) binds and cleaves glutamine to supply the large subunit with the substrate ammonia. In Neisseria meningitidis serogroup B (strain ATCC BAA-335 / MC58), this protein is Carbamoyl phosphate synthase small chain.